The sequence spans 195 residues: ATP-dependent Clp protease proteolytic subunit (195 aa).

The Nucleophile role is filled by Ser-96. The active site involves His-121.

This sequence belongs to the peptidase S14 family. Fourteen ClpP subunits assemble into 2 heptameric rings which stack back to back to give a disk-like structure with a central cavity, resembling the structure of eukaryotic proteasomes.

It is found in the cytoplasm. The catalysed reaction is Hydrolysis of proteins to small peptides in the presence of ATP and magnesium. alpha-casein is the usual test substrate. In the absence of ATP, only oligopeptides shorter than five residues are hydrolyzed (such as succinyl-Leu-Tyr-|-NHMec, and Leu-Tyr-Leu-|-Tyr-Trp, in which cleavage of the -Tyr-|-Leu- and -Tyr-|-Trp bonds also occurs).. Its function is as follows. Cleaves peptides in various proteins in a process that requires ATP hydrolysis. Has a chymotrypsin-like activity. Plays a major role in the degradation of misfolded proteins. The polypeptide is ATP-dependent Clp protease proteolytic subunit (Elusimicrobium minutum (strain Pei191)).